Consider the following 369-residue polypeptide: Nuclear hormone receptor family member nhr-64 (369 aa).

The nuclear receptor DNA-binding region spans 67-142 (EKCQVDKAKR…ASTRGLRTTV (76 aa)). NR C4-type zinc fingers lie at residues 70–90 (QVDK…CLRK) and 106–130 (PANP…TLIR). One can recognise an NR LBD domain in the interval 120–352 (PDDPLLDTLI…NLMLELMLPN (233 aa)).

Belongs to the nuclear hormone receptor family.

Its subcellular location is the nucleus. Orphan nuclear receptor. In Caenorhabditis elegans, this protein is Nuclear hormone receptor family member nhr-64 (nhr-64).